Here is a 322-residue protein sequence, read N- to C-terminus: Formimidoylglutamase (322 aa).

Residues H130, D156, H158, D160, C245, and D247 each coordinate Mn(2+).

It belongs to the arginase family. The cofactor is Mn(2+).

The enzyme catalyses N-formimidoyl-L-glutamate + H2O = formamide + L-glutamate. It functions in the pathway amino-acid degradation; L-histidine degradation into L-glutamate; L-glutamate from N-formimidoyl-L-glutamate (hydrolase route): step 1/1. Functionally, catalyzes the conversion of N-formimidoyl-L-glutamate to L-glutamate and formamide. The polypeptide is Formimidoylglutamase (Lysinibacillus sphaericus (strain C3-41)).